The sequence spans 149 residues: Large ribosomal subunit protein uL15 (149 aa).

The tract at residues 21 to 54 is disordered; that stretch reads RGSASGLGCTSGKGNKGQNARSGGGVRPGFEGGQ. 2 stretches are compositionally biased toward gly residues: residues 23 to 35 and 42 to 52; these read SASG…GKGN and SGGGVRPGFEG.

Belongs to the universal ribosomal protein uL15 family. In terms of assembly, part of the 50S ribosomal subunit.

Functionally, binds to the 23S rRNA. In Lawsonia intracellularis (strain PHE/MN1-00), this protein is Large ribosomal subunit protein uL15.